We begin with the raw amino-acid sequence, 518 residues long: Glutamate--cysteine ligase (518 aa).

The protein belongs to the glutamate--cysteine ligase type 1 family. Type 1 subfamily.

It carries out the reaction L-cysteine + L-glutamate + ATP = gamma-L-glutamyl-L-cysteine + ADP + phosphate + H(+). It participates in sulfur metabolism; glutathione biosynthesis; glutathione from L-cysteine and L-glutamate: step 1/2. The polypeptide is Glutamate--cysteine ligase (Salmonella agona (strain SL483)).